The primary structure comprises 358 residues: Sulfate/thiosulfate import ATP-binding protein CysA 1 (358 aa).

Residues Ile3–Leu237 enclose the ABC transporter domain. Gly35 to Thr42 contacts ATP.

It belongs to the ABC transporter superfamily. Sulfate/tungstate importer (TC 3.A.1.6) family. The complex is composed of two ATP-binding proteins (CysA), two transmembrane proteins (CysT and CysW) and a solute-binding protein (CysP).

It localises to the cell inner membrane. It carries out the reaction sulfate(out) + ATP + H2O = sulfate(in) + ADP + phosphate + H(+). It catalyses the reaction thiosulfate(out) + ATP + H2O = thiosulfate(in) + ADP + phosphate + H(+). Functionally, part of the ABC transporter complex CysAWTP involved in sulfate/thiosulfate import. Responsible for energy coupling to the transport system. This is Sulfate/thiosulfate import ATP-binding protein CysA 1 from Chromobacterium violaceum (strain ATCC 12472 / DSM 30191 / JCM 1249 / CCUG 213 / NBRC 12614 / NCIMB 9131 / NCTC 9757 / MK).